The chain runs to 78 residues: Translation initiation factor IF-1, chloroplastic (78 aa).

Residues 1 to 72 (MKKQNLIEME…TKGRITYRLR (72 aa)) enclose the S1-like domain.

The protein belongs to the IF-1 family. As to quaternary structure, component of the 30S ribosomal translation pre-initiation complex which assembles on the 30S ribosome in the order IF-2 and IF-3, IF-1 and N-formylmethionyl-tRNA(fMet); mRNA recruitment can occur at any time during PIC assembly.

The protein resides in the plastid. Its subcellular location is the chloroplast. In terms of biological role, one of the essential components for the initiation of protein synthesis. Stabilizes the binding of IF-2 and IF-3 on the 30S subunit to which N-formylmethionyl-tRNA(fMet) subsequently binds. Helps modulate mRNA selection, yielding the 30S pre-initiation complex (PIC). Upon addition of the 50S ribosomal subunit IF-1, IF-2 and IF-3 are released leaving the mature 70S translation initiation complex. This is Translation initiation factor IF-1, chloroplastic from Chaetosphaeridium globosum (Charophycean green alga).